Reading from the N-terminus, the 114-residue chain is MNTFKVQFFSPDDQISFSGVVSLSVTGLEGELMILAHHAPYLIYLLPGMITVKMSNQTEKKVVIDSGVLEVANNNCSIITSQIQVFDRAIHDEKSFKNKRISIYLSYLDEKFLS.

Belongs to the ATPase epsilon chain family. In terms of assembly, F-type ATPases have 2 components, CF(1) - the catalytic core - and CF(0) - the membrane proton channel. CF(1) has five subunits: alpha(3), beta(3), gamma(1), delta(1), epsilon(1). CF(0) has three main subunits: a, b and c.

The protein resides in the cell membrane. Functionally, produces ATP from ADP in the presence of a proton gradient across the membrane. This Wolbachia pipientis wMel protein is ATP synthase epsilon chain.